The sequence spans 126 residues: Antimicrobial protein 1 (126 aa).

Positions 1–24 are cleaved as a signal peptide; sequence MRSSLLLGLTVVLLLGVTVPPCMA.

In terms of tissue distribution, strongly expressed in gills, hemocytes and reproductive tract, with weaker expression in muscle, heart and digestive tract. Not detected in eyes and hepatopancreas (at protein level).

The protein localises to the secreted. Functionally, has antibacterial activity against the Gram-positive bacteria E.coli (MIC&lt;50 ug/ml) and P.aeruginosa (MIC&lt;25 ug/ml), and the Gram-negative bacteria S.aureus (MIC&lt;100 ug/ml) and S.pyogenes (MIC&lt;50 ug/ml). This chain is Antimicrobial protein 1, found in Scylla serrata (Mud crab).